The sequence spans 727 residues: Ankyrin repeat domain-containing protein 6 (727 aa).

ANK repeat units lie at residues 9-38, 41-70, 74-103, 107-136, 140-169, 173-202, 206-235, and 239-268; these read ALSE…RVAV, HGRT…DLDV, GDQT…ALDR, DGNT…NVLA, AGNT…RADL, AGDT…SVHE, AGDT…DTTI, and AGQT…VLRF. The tract at residues 277–386 is disordered; the sequence is KRERLKEERR…HRCSSPPPPH (110 aa). Basic and acidic residues predominate over residues 280-296; it reads RLKEERRAQSVPRDEVA. Over residues 298–312 the composition is skewed to polar residues; that stretch reads SKGSVSAGDTPSSEQ. The segment covering 314–324 has biased composition (basic and acidic residues); sequence VARKEEAREEF. Positions 363–379 are enriched in basic residues; it reads KNLHAHNHPKKRNRHRC. Residues 417-446 are a coiled coil; it reads LINKLENQLEATVEEIKAELGSVQDKMNTK. Over residues 548-557 the composition is skewed to low complexity; sequence PAAASDSSPP. Disordered regions lie at residues 548-586 and 601-657; these read PAAA…CTGS and NEAA…TGPH. The segment covering 566–584 has biased composition (polar residues); the sequence is LNSTATQRLQQELSSSDCT. The span at 622–633 shows a compositional bias: basic residues; sequence KSGKSGPTRHRA. A coiled-coil region spans residues 682-727; sequence WYERKIEEARSQANQKAQQDKATLKEHIKSLEEELAKLRTRVQKEN.

In terms of assembly, interacts with AXN1, AXN2 and CSNK1E/CKI-epsilon.

Its function is as follows. Recruits CKI-epsilon to the beta-catenin degradation complex that consists of AXN1 or AXN2 and GSK3-beta and allows efficient phosphorylation of beta-catenin, thereby inhibiting beta-catenin/Tcf signals. The protein is Ankyrin repeat domain-containing protein 6 (ANKRD6) of Homo sapiens (Human).